The following is a 286-amino-acid chain: Eukaryotic translation initiation factor 3 subunit J (286 aa).

Disordered stretches follow at residues 1-35 (MSWD…DSWD), 141-162 (AASG…HPLF), and 229-258 (KAER…AVKT). Positions 21 to 35 (WEEEGNDEPLLDSWD) are enriched in acidic residues. Positions 35–75 (DIDEEEVARKKKEEEAKKKAEKEALKKKQEESKAKKLSKNK) form a coiled coil.

Belongs to the eIF-3 subunit J family. Component of the eukaryotic translation initiation factor 3 (eIF-3) complex.

The protein localises to the cytoplasm. Its function is as follows. Component of the eukaryotic translation initiation factor 3 (eIF-3) complex, which is involved in protein synthesis of a specialized repertoire of mRNAs and, together with other initiation factors, stimulates binding of mRNA and methionyl-tRNAi to the 40S ribosome. The eIF-3 complex specifically targets and initiates translation of a subset of mRNAs involved in cell proliferation. The sequence is that of Eukaryotic translation initiation factor 3 subunit J from Debaryomyces hansenii (strain ATCC 36239 / CBS 767 / BCRC 21394 / JCM 1990 / NBRC 0083 / IGC 2968) (Yeast).